The sequence spans 309 residues: Putative taste receptor type 2 member 36 (309 aa).

Residue methionine 1 is a topological domain, extracellular. The helical transmembrane segment at 2 to 22 (ICFLLIILSILVVFAFVLGNF) threads the bilayer. Residues 23 to 46 (SNGFIALVNVIDWVKRQKISSADQ) are Cytoplasmic-facing. Residues 47–67 (ILTALVVSRVGLLWVILLHWY) traverse the membrane as a helical segment. Residues 68–79 (SNVLNSALYSSE) lie on the Extracellular side of the membrane. A helical membrane pass occupies residues 80 to 100 (VIIFISNAWAIINHFSIWLAT). The Cytoplasmic segment spans residues 101–126 (SLSIFYLLKIVNFSRLIFHHLKRKAK). The chain crosses the membrane as a helical span at residues 127–147 (SVVLVIVLGPLVFLVCHLVMK). At 148–181 (HTYINVWTKEYEGNVTWKIKLRNAIHLSNLTVST) the chain is on the extracellular side. 2 N-linked (GlcNAc...) asparagine glycosylation sites follow: asparagine 161 and asparagine 176. The helical transmembrane segment at 182 to 202 (LANLIPFTLTLISFLLLIYSL) threads the bilayer. Topologically, residues 203–229 (CKHLKKMQLHGKGSQDPSTKVHIKALQ) are cytoplasmic. A helical transmembrane segment spans residues 230–250 (TVTSFLLLCAIYFLSMIISVC). Over 251-259 (NFGRLEKQP) the chain is Extracellular. Residues 260–280 (VFMFCQAIIFSYPSTHPFILI) form a helical membrane-spanning segment. Residues 281–309 (LGNKKLKQIFLSVFWQMRYWVKGEKPSSP) lie on the Cytoplasmic side of the membrane.

This sequence belongs to the G-protein coupled receptor T2R family.

The protein localises to the membrane. Its function is as follows. Putative taste receptor which may play a role in the perception of bitterness. The polypeptide is Putative taste receptor type 2 member 36 (Homo sapiens (Human)).